The following is a 65-amino-acid chain: MDPEACPCPTGGSCTCSDSCKCEGCTCASSKKSCCPAECEKCAKDCVCKGGEGAEAEEKKCGCCQ.

Met-1 is subject to N-acetylmethionine. Residues 1–30 form a beta region; the sequence is MDPEACPCPTGGSCTCSDSCKCEGCTCASS. 8 residues coordinate a divalent metal cation: Cys-6, Cys-8, Cys-14, Cys-16, Cys-20, Cys-22, Cys-25, and Cys-27. The segment at 31–65 is alpha; that stretch reads KKSCCPAECEKCAKDCVCKGGEGAEAEEKKCGCCQ. Ser-33 carries the post-translational modification Phosphoserine. A divalent metal cation-binding residues include Cys-34, Cys-35, Cys-39, Cys-42, Cys-46, Cys-48, Cys-61, Cys-63, and Cys-64.

Belongs to the metallothionein superfamily. Type 1 family.

Its function is as follows. Binds heavy metals. Contains five zinc and one copper atoms per polypeptide chain and only a negligible amount of cadmium. This chain is Metallothionein-3 (MT3), found in Ovis aries (Sheep).